The following is a 129-amino-acid chain: Replication initiation control protein YabA (129 aa).

Positions 103, 105, 119, and 122 each coordinate Zn(2+).

Belongs to the YabA family. In terms of assembly, homotetramer. Interacts with both DnaA and DnaN, acting as a bridge between these two proteins. Requires Zn(2+) as cofactor.

It is found in the cytoplasm. The protein localises to the nucleoid. In terms of biological role, involved in control of chromosome replication initiation. Inhibits the cooperative binding of DnaA to the oriC region, thus negatively regulating initiation of chromosome replication. Inhibits the ability of DnaA-ATP to form a helix on DNA; does not disassemble preformed DnaA-DNA helices. Decreases the residence time of DnaA on the chromosome at its binding sites (oriC, replication forks and promoter-binding sites). Tethers DnaA to the replication machinery via the DNA polymerase beta sliding clamp subunit (dnaN). Associates with oriC and other DnaA targets on the chromosome in a DnaA-dependent manner. The protein is Replication initiation control protein YabA of Listeria monocytogenes serotype 4b (strain CLIP80459).